The chain runs to 87 residues: Beta-toxin Ct17 (87 aa).

A signal peptide spans 1 to 19 (MNSLLMITACLVLIGTVWA). Residues 20–85 (KKDGYLVDKT…TWPLPNKRCG (66 aa)) enclose the LCN-type CS-alpha/beta domain. Intrachain disulfides connect Cys31–Cys84, Cys35–Cys60, Cys44–Cys65, and Cys48–Cys67. Cysteine amide is present on Cys84.

The protein belongs to the long (4 C-C) scorpion toxin superfamily. Sodium channel inhibitor family. Beta subfamily. As to expression, expressed by the venom gland.

It is found in the secreted. Its function is as follows. Beta toxins bind voltage-independently at site-4 of sodium channels (Nav) and shift the voltage of activation toward more negative potentials thereby affecting sodium channel activation and promoting spontaneous and repetitive firing. Is possibly lethal to mice, freshwater shrimp and crickets. The chain is Beta-toxin Ct17 from Centruroides tecomanus (Scorpion).